Consider the following 240-residue polypeptide: Ribonuclease 3 (240 aa).

Positions V9–G141 constitute an RNase III domain. Position 54 (E54) interacts with Mg(2+). D58 is a catalytic residue. D127 and E130 together coordinate Mg(2+). E130 is an active-site residue. Positions D168–K237 constitute a DRBM domain.

Belongs to the ribonuclease III family. Homodimer. The cofactor is Mg(2+).

The protein resides in the cytoplasm. The catalysed reaction is Endonucleolytic cleavage to 5'-phosphomonoester.. Digests double-stranded RNA. Involved in the processing of primary rRNA transcript to yield the immediate precursors to the large and small rRNAs (23S and 16S). Processes some mRNAs, and tRNAs when they are encoded in the rRNA operon. Processes pre-crRNA and tracrRNA of type II CRISPR loci if present in the organism. This chain is Ribonuclease 3, found in Thermotoga petrophila (strain ATCC BAA-488 / DSM 13995 / JCM 10881 / RKU-1).